Reading from the N-terminus, the 265-residue chain is Orotidine 5'-phosphate decarboxylase (265 aa).

Residues Asp-38, 60-62 (KTH), 92-101 (DRKFADIGKT), Tyr-218, and Arg-236 each bind substrate. Lys-94 serves as the catalytic Proton donor.

The protein belongs to the OMP decarboxylase family.

The catalysed reaction is orotidine 5'-phosphate + H(+) = UMP + CO2. It participates in pyrimidine metabolism; UMP biosynthesis via de novo pathway; UMP from orotate: step 2/2. In Cyberlindnera fabianii (Yeast), this protein is Orotidine 5'-phosphate decarboxylase (URA3).